The sequence spans 256 residues: Major prion protein (256 aa).

Positions Met1 to Cys24 are cleaved as a signal peptide. Residues Lys25 to Ala233 form an interaction with GRB2, ERI3 and SYN1 region. A disordered region spans residues Pro28–Thr110. Repeat copies occupy residues Pro54–Gln62, Pro63–Gln70, Pro71–Gln78, Pro79–Gln86, and Pro87–Gln95. The segment at Pro54–Gln95 is 5 X 8 AA tandem repeats of P-H-G-G-G-W-G-Q. The segment covering Gln55–Gly97 has biased composition (gly residues). 12 residues coordinate Cu(2+): His64, Gly65, Gly66, His72, Gly73, Gly74, His80, Gly81, Gly82, His88, Gly90, and Gly91. An intrachain disulfide couples Cys182 to Cys217. N-linked (GlcNAc...) asparagine glycosylation is found at Asn184 and Asn200. Ala233 is lipidated: GPI-anchor amidated alanine. Positions Ser234 to Gly256 are cleaved as a propeptide — removed in mature form.

This sequence belongs to the prion family. As to quaternary structure, monomer and homodimer. Has a tendency to aggregate into amyloid fibrils containing a cross-beta spine, formed by a steric zipper of superposed beta-strands. Soluble oligomers may represent an intermediate stage on the path to fibril formation. Copper binding may promote oligomerization. Interacts with GRB2, APP, ERI3/PRNPIP and SYN1. Mislocalized cytosolically exposed PrP interacts with MGRN1; this interaction alters MGRN1 subcellular location and causes lysosomal enlargement. Interacts with KIAA1191.

Its subcellular location is the cell membrane. The protein localises to the golgi apparatus. Functionally, its primary physiological function is unclear. Has cytoprotective activity against internal or environmental stresses. May play a role in neuronal development and synaptic plasticity. May be required for neuronal myelin sheath maintenance. May play a role in iron uptake and iron homeostasis. Soluble oligomers are toxic to cultured neuroblastoma cells and induce apoptosis (in vitro). Association with GPC1 (via its heparan sulfate chains) targets PRNP to lipid rafts. Also provides Cu(2+) or Zn(2+) for the ascorbate-mediated GPC1 deaminase degradation of its heparan sulfate side chains. The protein is Major prion protein (PRNP) of Ovis canadensis (Bighorn sheep).